We begin with the raw amino-acid sequence, 53 residues long: Ferredoxin B (53 aa).

The interval 1–35 is N-terminal extension; the sequence is GIDPNYRSLPVVKEEQGVKIYGTYEPPTKLGIWGT. Lys-29 bears the N6-methyllysine mark. The 20-residue stretch at 34–53 folds into the 4Fe-4S ferredoxin-type 1 domain; it reads GTIVGVDFDLCIADGSCINA. [3Fe-4S] cluster-binding residues include Cys-44 and Cys-50.

Requires [3Fe-4S] cluster as cofactor. [4Fe-4S] cluster is required as a cofactor.

Its function is as follows. Ferredoxins are iron-sulfur proteins that transfer electrons in a wide variety of metabolic reactions. This chain is Ferredoxin B, found in Sulfuracidifex metallicus (Sulfolobus metallicus).